Reading from the N-terminus, the 117-residue chain is MNNIIKMLNDEQMKTDVPDFGAGDTVVVQVRVKEGEKERLQAFEGLVIAKRNRGLHSAFTVRKISNGEGVERAFQTHSPLIASIEVKRRGRVRRAKLYYLRERSGKSARIREKLATK.

The protein belongs to the bacterial ribosomal protein bL19 family.

Its function is as follows. This protein is located at the 30S-50S ribosomal subunit interface and may play a role in the structure and function of the aminoacyl-tRNA binding site. The sequence is that of Large ribosomal subunit protein bL19 from Shewanella frigidimarina (strain NCIMB 400).